Here is a 354-residue protein sequence, read N- to C-terminus: Phenylalanine 4-monooxygenase, chloroplastic (354 aa).

Residues 1-60 constitute a chloroplast transit peptide; sequence MAFPLQKTFLCSNGQSFPCSNGRSTSTLLASDLKFQRLNKPFILRVGSMQIRNSPKEHPR. The Fe cation site is built by His-229, His-234, and Glu-274.

This sequence belongs to the biopterin-dependent aromatic amino acid hydroxylase family. As to quaternary structure, forms monomers. It depends on Fe(2+) as a cofactor.

It localises to the plastid. It is found in the chloroplast. It catalyses the reaction (6R)-L-erythro-5,6,7,8-tetrahydrobiopterin + L-phenylalanine + O2 = (4aS,6R)-4a-hydroxy-L-erythro-5,6,7,8-tetrahydrobiopterin + L-tyrosine. Its function is as follows. Catalyzes the hydroxylation of L-phenylalanine to L-tyrosine. Does not seem to be tetrahydropterin-dependent and shows preference for 10-formyltetrahydrofolate as cosubstrate and electron donor. The sequence is that of Phenylalanine 4-monooxygenase, chloroplastic from Pinus taeda (Loblolly pine).